The sequence spans 882 residues: DNA mismatch repair protein MutS (882 aa).

Position 627–634 (627–634) interacts with ATP; the sequence is GPNMAGKS.

It belongs to the DNA mismatch repair MutS family.

Functionally, this protein is involved in the repair of mismatches in DNA. It is possible that it carries out the mismatch recognition step. This protein has a weak ATPase activity. The sequence is that of DNA mismatch repair protein MutS from Anaeromyxobacter sp. (strain K).